The primary structure comprises 158 residues: Protein-export protein SecB (158 aa).

It belongs to the SecB family. As to quaternary structure, homotetramer, a dimer of dimers. One homotetramer interacts with 1 SecA dimer.

It is found in the cytoplasm. In terms of biological role, one of the proteins required for the normal export of preproteins out of the cell cytoplasm. It is a molecular chaperone that binds to a subset of precursor proteins, maintaining them in a translocation-competent state. It also specifically binds to its receptor SecA. This Photorhabdus laumondii subsp. laumondii (strain DSM 15139 / CIP 105565 / TT01) (Photorhabdus luminescens subsp. laumondii) protein is Protein-export protein SecB.